Here is a 373-residue protein sequence, read N- to C-terminus: Glutamate 5-kinase (373 aa).

Lysine 16 is a binding site for ATP. Positions 56, 143, and 155 each coordinate substrate. 175-176 serves as a coordination point for ATP; sequence TD. The PUA domain maps to 281-359; the sequence is RGRLTLDDGA…SRIDSLLGYK (79 aa).

It belongs to the glutamate 5-kinase family.

It is found in the cytoplasm. The catalysed reaction is L-glutamate + ATP = L-glutamyl 5-phosphate + ADP. Its pathway is amino-acid biosynthesis; L-proline biosynthesis; L-glutamate 5-semialdehyde from L-glutamate: step 1/2. Functionally, catalyzes the transfer of a phosphate group to glutamate to form L-glutamate 5-phosphate. This chain is Glutamate 5-kinase, found in Saccharophagus degradans (strain 2-40 / ATCC 43961 / DSM 17024).